The primary structure comprises 328 residues: RNA-binding protein KhpB (328 aa).

The tract at residues 3-53 (VFTGSTVEEAIQKGLKELDIPRMKAHIKVISREKKGFLGLFGKKPAQVDIE) is jag_N domain. The linker stretch occupies residues 54–180 (AISETTVVKA…GLKVETNFDI (127 aa)). Residue Thr89 is modified to Phosphothreonine. Positions 181-258 (EQVATEVMAY…SRTFYVTINV (78 aa)) constitute a KH domain. The 66-residue stretch at 263–328 (EHRAEVLQTY…PNRYVVVDTE (66 aa)) folds into the R3H domain.

It belongs to the KhpB RNA-binding protein family. As to quaternary structure, interacts with KhpA; the 2 proteins colocalize throughout the cell cycle, with some increase at midcell in dividing cells. Interacts with StkP which phosphorylates it, interacts with MltG, MreC, RodZ and YidC2. Phosphorylated on Thr-89 by StkP; there is another poorly phosphorylated residue in the protein. Dephosphorylated by PhpP.

It is found in the cytoplasm. A probable RNA chaperone. Forms a complex with KhpA which binds to cellular RNA and controls its expression. Plays a role in peptidoglycan (PG) homeostasis and cell length regulation. In terms of biological role, forms a complex with KhpA which presumably binds to about 170 cellular RNAs (mRNA, tRNA intergenic RNA and sRNAs); the proteins alone each bind the same set of RNAs. Suppresses the requirement for PBP2b (penA, a transpeptidase) in peripheral peptidoglycan (PG) synthesis. May function as a pleiotropic RNA chaperone controlling pneumococcal cell division, including PG homeostasis and regulating peripheral PG synthesis by the elongasome. The protein is RNA-binding protein KhpB of Streptococcus pneumoniae serotype 2 (strain D39 / NCTC 7466).